The following is a 368-amino-acid chain: MADAQNISLDSPGSVGAVAVPVVFALIFLLGTVGNGLVLAVLLQPGPSAWQEPGSTTDLFILNLAVADLCFILCCVPFQATIYTLDAWLFGALVCKAVHLLIYLTMYASSFTLAAVSVDRYLAVRHPLRSRALRTPRNARAAVGLVWLLAALFSAPYLSYYGTVRYGALELCVPAWEDARRRALDVATFAAGYLLPVAVVSLAYGRTLRFLWAAVGPAGAAAAEARRRATGRAGRAMLAVAALYALCWGPHHALILCFWYGRFAFSPATYACRLASHCLAYANSCLNPLVYALASRHFRARFRRLWPCGRRRRHRARRALRRVRPASSGPPGCPGDARPSGRLLAGGGQGPEPREGPVHGGEAARGPE.

At M1–V20 the chain is on the extracellular side. Residue N6 is glycosylated (N-linked (GlcNAc...) asparagine). A helical membrane pass occupies residues P21–V41. Over L42 to T57 the chain is Cytoplasmic. A helical membrane pass occupies residues D58 to F78. Residues Q79–K96 are Extracellular-facing. A disulfide bridge links C95 with C172. Residues A97 to V118 form a helical membrane-spanning segment. The Cytoplasmic portion of the chain corresponds to D119–N138. A helical membrane pass occupies residues A139 to S159. The Extracellular segment spans residues Y160–L184. A helical transmembrane segment spans residues D185 to G205. The Cytoplasmic portion of the chain corresponds to R206–A236. A helical membrane pass occupies residues M237 to C257. The Extracellular portion of the chain corresponds to F258–W259. A helical transmembrane segment spans residues Y260–A280. The Cytoplasmic segment spans residues Y281–E368. C308 carries S-palmitoyl cysteine lipidation. The disordered stretch occupies residues R317 to E368.

This sequence belongs to the G-protein coupled receptor 1 family.

Its subcellular location is the cell membrane. In terms of biological role, receptor for the hormone galanin. Receptor for the hormone spexin-1. The sequence is that of Galanin receptor type 3 (GALR3) from Homo sapiens (Human).